We begin with the raw amino-acid sequence, 512 residues long: Retinaldehyde dehydrogenase 3 (512 aa).

Residues 1 to 23 (MATANGAVENGQPDGKPPALPRP) are disordered. Alanine 2 carries the post-translational modification N-acetylalanine. NAD(+) contacts are provided by residues lysine 204, glutamate 207, and 257–262 (GSTEVG). Glutamate 280 acts as the Proton acceptor in catalysis. Cysteine 314 functions as the Nucleophile in the catalytic mechanism. 2 residues coordinate NAD(+): glutamine 361 and glutamate 411.

It belongs to the aldehyde dehydrogenase family. Homotetramer.

Its subcellular location is the cytoplasm. It carries out the reaction all-trans-retinal + NAD(+) + H2O = all-trans-retinoate + NADH + 2 H(+). The catalysed reaction is retinal + NAD(+) + H2O = retinoate + NADH + 2 H(+). It catalyses the reaction all-trans-13,14-dihydroretinal + NAD(+) + H2O = all-trans-13,14-dihydroretinoate + NADH + 2 H(+). The protein operates within cofactor metabolism; retinol metabolism. Catalyzes the NAD-dependent oxidation of aldehyde substrates, such as all-trans-retinal and all-trans-13,14-dihydroretinal, to their corresponding carboxylic acids, all-trans-retinoate and all-trans-13,14-dihydroretinoate, respectively. High specificity for all-trans-retinal as substrate, can also accept acetaldehyde as substrate in vitro but with lower affinity. Required for the biosynthesis of normal levels of retinoate in the embryonic ocular and nasal regions; a critical lipid in the embryonic development of the eye and the nasal region. This Rattus norvegicus (Rat) protein is Retinaldehyde dehydrogenase 3 (Aldh1a3).